Here is an 88-residue protein sequence, read N- to C-terminus: Small ribosomal subunit protein uS15 (88 aa).

It belongs to the universal ribosomal protein uS15 family. Part of the 30S ribosomal subunit. Forms a bridge to the 50S subunit in the 70S ribosome, contacting the 23S rRNA.

Functionally, one of the primary rRNA binding proteins, it binds directly to 16S rRNA where it helps nucleate assembly of the platform of the 30S subunit by binding and bridging several RNA helices of the 16S rRNA. Forms an intersubunit bridge (bridge B4) with the 23S rRNA of the 50S subunit in the ribosome. This Caldicellulosiruptor saccharolyticus (strain ATCC 43494 / DSM 8903 / Tp8T 6331) protein is Small ribosomal subunit protein uS15.